The chain runs to 347 residues: F-box protein At2g14500 (347 aa).

Residues 6–52 (PLTLSELPHDLLRNIFNRLSFADFHRATWNSISKQTAPPKTKSPWLI) enclose the F-box domain.

The protein is F-box protein At2g14500 of Arabidopsis thaliana (Mouse-ear cress).